Reading from the N-terminus, the 259-residue chain is Ribosomal RNA small subunit methyltransferase A (259 aa).

Residues Asn-15, Leu-17, Gly-41, Glu-62, Asp-86, and Asn-105 each contribute to the S-adenosyl-L-methionine site.

It belongs to the class I-like SAM-binding methyltransferase superfamily. rRNA adenine N(6)-methyltransferase family. RsmA subfamily.

Its subcellular location is the cytoplasm. The enzyme catalyses adenosine(1518)/adenosine(1519) in 16S rRNA + 4 S-adenosyl-L-methionine = N(6)-dimethyladenosine(1518)/N(6)-dimethyladenosine(1519) in 16S rRNA + 4 S-adenosyl-L-homocysteine + 4 H(+). In terms of biological role, specifically dimethylates two adjacent adenosines (A1518 and A1519) in the loop of a conserved hairpin near the 3'-end of 16S rRNA in the 30S particle. May play a critical role in biogenesis of 30S subunits. The sequence is that of Ribosomal RNA small subunit methyltransferase A from Mycoplasmopsis synoviae (strain 53) (Mycoplasma synoviae).